Reading from the N-terminus, the 100-residue chain is MDLSKYLTVSMILFLLGIWGIFLNRKNIIVMLMSIELMLLAVNLNFLLFSVYIDDCIGQLFALLILTVAAAESAIGLALLVVYYRIRGTIAVEFINLMKG.

Transmembrane regions (helical) follow at residues 3 to 23 (LSKY…GIFL), 28 to 48 (IIVM…NFLL), and 61 to 81 (FALL…ALLV).

It belongs to the complex I subunit 4L family. As to quaternary structure, complex I is composed of about 45 different subunits.

The protein localises to the mitochondrion membrane. The enzyme catalyses a ubiquinone + NADH + 5 H(+)(in) = a ubiquinol + NAD(+) + 4 H(+)(out). Functionally, core subunit of the mitochondrial membrane respiratory chain NADH dehydrogenase (Complex I) that is believed to belong to the minimal assembly required for catalysis. Complex I functions in the transfer of electrons from NADH to the respiratory chain. The immediate electron acceptor for the enzyme is believed to be ubiquinone. The protein is NADH-ubiquinone oxidoreductase chain 4L (ND4L) of Prototheca wickerhamii.